The primary structure comprises 388 residues: 4-hydroxycoumarin synthase 2 (388 aa).

Cys159 is an active-site residue.

It belongs to the thiolase-like superfamily. Chalcone/stilbene synthases family. In terms of assembly, homodimer.

The catalysed reaction is 2-hydroxybenzoyl-CoA + malonyl-CoA = 4-hydroxycoumarin + CO2 + 2 CoA. Functionally, type III polyketide synthase involved preferentially in the biosynthesis of 4-hydroxycoumarin from salicoyl-CoA. Can also use benzoyl-CoA and malonyl-CoA to produce 3,5-dihydroxybiphenyl as a major product and benzoyldiacetic acid lactone as a minor side product. Can also use m-hydroxybenzoyl-CoA as substrate, producing m-hydroxybenzoyl diacetic acid lactone as a derailment product. No activity with p-hydroxybenzoyl-CoA, CoA-linked cinnamic acids or acetyl-CoA. The polypeptide is 4-hydroxycoumarin synthase 2 (BIS3) (Sorbus aucuparia (European mountain ash)).